A 189-amino-acid polypeptide reads, in one-letter code: Acireductone dioxygenase 1 (189 aa).

His-102, His-104, Glu-108, and His-146 together coordinate Fe(2+). Residues His-102, His-104, Glu-108, and His-146 each coordinate Ni(2+).

Belongs to the acireductone dioxygenase (ARD) family. As to quaternary structure, monomer. Fe(2+) serves as cofactor. It depends on Ni(2+) as a cofactor.

It carries out the reaction 1,2-dihydroxy-5-(methylsulfanyl)pent-1-en-3-one + O2 = 3-(methylsulfanyl)propanoate + CO + formate + 2 H(+). The catalysed reaction is 1,2-dihydroxy-5-(methylsulfanyl)pent-1-en-3-one + O2 = 4-methylsulfanyl-2-oxobutanoate + formate + 2 H(+). It participates in amino-acid biosynthesis; L-methionine biosynthesis via salvage pathway; L-methionine from S-methyl-5-thio-alpha-D-ribose 1-phosphate: step 5/6. Catalyzes 2 different reactions between oxygen and the acireductone 1,2-dihydroxy-3-keto-5-methylthiopentene (DHK-MTPene) depending upon the metal bound in the active site. Fe-containing acireductone dioxygenase (Fe-ARD) produces formate and 2-keto-4-methylthiobutyrate (KMTB), the alpha-ketoacid precursor of methionine in the methionine recycle pathway. Ni-containing acireductone dioxygenase (Ni-ARD) produces methylthiopropionate, carbon monoxide and formate, and does not lie on the methionine recycle pathway. This chain is Acireductone dioxygenase 1, found in Nocardia farcinica (strain IFM 10152).